Consider the following 307-residue polypeptide: uncharacterized protein (307 aa).

This is an uncharacterized protein from Saccharum officinarum (Sugarcane).